The chain runs to 408 residues: Dihydrolipoyllysine-residue acetyltransferase component of pyruvate dehydrogenase complex (408 aa).

One can recognise a Lipoyl-binding domain in the interval 2–78; that stretch reads PIKILMPALS…PVNSLIAVLS (77 aa). K43 carries the N6-lipoyllysine modification. A Peripheral subunit-binding (PSBD) domain is found at 128–165; the sequence is FASPLAKRLAKIGDIRLENVQGSGPHGRIVKQDILSYD. H381 is a catalytic residue.

The protein belongs to the 2-oxoacid dehydrogenase family. Forms a 24-polypeptide structural core with octahedral symmetry. The cofactor is (R)-lipoate.

The enzyme catalyses N(6)-[(R)-dihydrolipoyl]-L-lysyl-[protein] + acetyl-CoA = N(6)-[(R)-S(8)-acetyldihydrolipoyl]-L-lysyl-[protein] + CoA. The pyruvate dehydrogenase complex catalyzes the overall conversion of pyruvate to acetyl-CoA and CO(2). It contains multiple copies of three enzymatic components: pyruvate dehydrogenase (E1), dihydrolipoamide acetyltransferase (E2) and lipoamide dehydrogenase (E3). The chain is Dihydrolipoyllysine-residue acetyltransferase component of pyruvate dehydrogenase complex (pdhC) from Rickettsia prowazekii (strain Madrid E).